We begin with the raw amino-acid sequence, 101 residues long: uncharacterized protein (101 aa).

This is an uncharacterized protein from Saccharomyces cerevisiae (strain ATCC 204508 / S288c) (Baker's yeast).